Here is a 544-residue protein sequence, read N- to C-terminus: Hydroxylamine reductase (544 aa).

Positions 3, 6, 15, and 21 each coordinate [4Fe-4S] cluster. Hybrid [4Fe-2O-2S] cluster is bound by residues His244, Glu268, Cys313, Cys400, Cys428, Cys453, Glu487, and Lys489. Cys400 is subject to Cysteine persulfide.

The protein belongs to the HCP family. The cofactor is [4Fe-4S] cluster. Requires hybrid [4Fe-2O-2S] cluster as cofactor.

The protein resides in the cytoplasm. The catalysed reaction is A + NH4(+) + H2O = hydroxylamine + AH2 + H(+). Functionally, catalyzes the reduction of hydroxylamine to form NH(3) and H(2)O. The chain is Hydroxylamine reductase from Trichormus variabilis (strain ATCC 29413 / PCC 7937) (Anabaena variabilis).